The chain runs to 342 residues: Metalloendoproteinase 4-MMP (342 aa).

Residues 1 to 34 form the signal peptide; the sequence is MHHHHHPCNRKPFTTIFSFFLLYLNLHNQQIIEA. Residues 35–124 constitute a propeptide, activation peptide; sequence RNPSQFTTNP…KTAPFHTGKK (90 aa). The short motif at 104–111 is the Cysteine switch element; that stretch reads PRCGFPDD. Zn(2+)-binding residues include Cys-106 and His-252. Residue Glu-253 is part of the active site. Residues His-256 and His-262 each contribute to the Zn(2+) site. Residue Asn-300 is glycosylated (N-linked (GlcNAc...) asparagine). Residue Asp-317 is the site of GPI-anchor amidated aspartate attachment. A propeptide spans 318–342 (removed in mature form); that stretch reads GSRIRSQGMIYSTLSTVIALCFLNW.

Belongs to the peptidase M10A family. Matrix metalloproteinases (MMPs) subfamily. Requires Zn(2+) as cofactor. Mostly expressed in flowers and stems, and, to a lower extent, in leaves and roots.

It localises to the cell membrane. Its activity is regulated as follows. Repressed by acetohydroxamic acid (AHA). Matrix metalloproteinases (MMPs) or matrixins may play a role in the degradation and remodeling of the extracellular matrix (ECM) during development or in response to stresses. Active on myelin basic protein (MBP) and, to some extent, on McaPLGLDpaAR-NH(2) (QF24) and beta-casein. The protein is Metalloendoproteinase 4-MMP of Arabidopsis thaliana (Mouse-ear cress).